The primary structure comprises 205 residues: Outer-membrane lipoprotein carrier protein (205 aa).

The signal sequence occupies residues 1 to 21; the sequence is MRFLAVATMVVALMVPWSVRA.

The protein belongs to the LolA family. In terms of assembly, monomer.

Its subcellular location is the periplasm. Its function is as follows. Participates in the translocation of lipoproteins from the inner membrane to the outer membrane. Only forms a complex with a lipoprotein if the residue after the N-terminal Cys is not an aspartate (The Asp acts as a targeting signal to indicate that the lipoprotein should stay in the inner membrane). This Methylobacillus flagellatus (strain ATCC 51484 / DSM 6875 / VKM B-1610 / KT) protein is Outer-membrane lipoprotein carrier protein.